Here is a 316-residue protein sequence, read N- to C-terminus: ATP synthase gamma chain (316 aa).

It belongs to the ATPase gamma chain family. In terms of assembly, F-type ATPases have 2 components, CF(1) - the catalytic core - and CF(0) - the membrane proton channel. CF(1) has five subunits: alpha(3), beta(3), gamma(1), delta(1), epsilon(1). CF(0) has three main subunits: a, b and c.

The protein localises to the cellular thylakoid membrane. Functionally, produces ATP from ADP in the presence of a proton gradient across the membrane. The gamma chain is believed to be important in regulating ATPase activity and the flow of protons through the CF(0) complex. The chain is ATP synthase gamma chain from Prochlorococcus marinus (strain MIT 9313).